Consider the following 1154-residue polypeptide: Coiled-coil domain-containing protein 136 (1154 aa).

The segment at 1-48 (MQAMEGEVLLPALYEEEEEEEEEEEEVEEEEEQVQKGGSVGSLSVNKH) is disordered. Positions 14–32 (YEEEEEEEEEEEEVEEEEE) are enriched in acidic residues. Position 52 is a phosphoserine (serine 52). Coiled coils occupy residues 696-733 (QAKQ…LQVQ) and 859-974 (KLQA…RPSV). Basic and acidic residues predominate over residues 1031-1058 (DGLAKEEEKKEEMEEEKKQVKEEAKEQC). The disordered stretch occupies residues 1031 to 1131 (DGLAKEEEKK…SSPTPNPPIF (101 aa)). A compositionally biased stretch (acidic residues) spans 1077 to 1109 (DQEENEEDKEEEEKEEDSEEEEDDADSSLESPE). A helical membrane pass occupies residues 1130–1150 (IFSLPLVGLVVISALLWCWWA).

As to expression, expressed in gastric tissues. Down-regulated in gastric cancer.

It is found in the cytoplasmic vesicle. Its subcellular location is the secretory vesicle. It localises to the acrosome membrane. Functionally, may play a role in acrosome formation in spermatogenesis and in fertilization. In Homo sapiens (Human), this protein is Coiled-coil domain-containing protein 136 (CCDC136).